Here is a 670-residue protein sequence, read N- to C-terminus: UvrABC system protein B (670 aa).

One can recognise a Helicase ATP-binding domain in the interval 51 to 433 (EGLKKREQFQ…SARIVEQIIR (383 aa)). 64–71 (GVTGSGKT) lines the ATP pocket. The Beta-hairpin signature appears at 117-140 (YYDYYQPESYLPAKDQYIEKDAQI). Residues 453–612 (DVMQEIRKIV…IVPKTIRKPI (160 aa)) enclose the Helicase C-terminal domain. The UVR domain occupies 631 to 666 (PNVIIELDAEMREAADRLDFERAIQLRELIKKLEKE).

Belongs to the UvrB family. Forms a heterotetramer with UvrA during the search for lesions. Interacts with UvrC in an incision complex.

The protein resides in the cytoplasm. In terms of biological role, the UvrABC repair system catalyzes the recognition and processing of DNA lesions. A damage recognition complex composed of 2 UvrA and 2 UvrB subunits scans DNA for abnormalities. Upon binding of the UvrA(2)B(2) complex to a putative damaged site, the DNA wraps around one UvrB monomer. DNA wrap is dependent on ATP binding by UvrB and probably causes local melting of the DNA helix, facilitating insertion of UvrB beta-hairpin between the DNA strands. Then UvrB probes one DNA strand for the presence of a lesion. If a lesion is found the UvrA subunits dissociate and the UvrB-DNA preincision complex is formed. This complex is subsequently bound by UvrC and the second UvrB is released. If no lesion is found, the DNA wraps around the other UvrB subunit that will check the other stand for damage. This is UvrABC system protein B from Methanosarcina acetivorans (strain ATCC 35395 / DSM 2834 / JCM 12185 / C2A).